A 1326-amino-acid chain; its full sequence is F-box/WD repeat-containing protein 7 (1326 aa).

Disordered stretches follow at residues 1 to 58, 123 to 187, 318 to 351, 399 to 549, 615 to 642, and 797 to 843; these read MERG…AEVG, DSSS…IEDE, TVSN…ALSR, GSKA…SGCS, RSNP…RNGS, and TPRS…NPPP. Polar residues predominate over residues 9–39; the sequence is SSESVTSAGERTQSAVTSSTSTWVKSQASTS. Residues 165-187 are compositionally biased toward acidic residues; the sequence is NDDDDDEEPEPEEDDEEELIEDE. Residues 320–348 show a composition bias toward low complexity; sequence SNPSPAASANAAAPEEASTSNSSSTSSSA. Positions 403-464 are enriched in polar residues; it reads ANGSGTANSD…KLNLGSSLGA (62 aa). Low complexity predominate over residues 465–486; the sequence is SSCSQHRSGSSSTSKSMESSTS. Positions 495–504 are enriched in polar residues; the sequence is VYTNTNSNDY. Low complexity-rich tracts occupy residues 510–520, 528–546, and 616–631; these read TTSGSSTSGGS, NVSA…SQES, and SNPP…GANP. Polar residues-rich tracts occupy residues 632 to 642 and 797 to 824; these read TASVRQRRNGS and TPRS…STPG. At Thr-813 the chain carries Phosphothreonine. Residue Ser-825 is modified to Phosphoserine. An F-box domain is found at 889 to 935; sequence RDFISLLPRELALFVLSYLEPKDLLRAAQTCRSWRFLCDDNLLWKEK. WD repeat units lie at residues 992–1030, 1033–1070, 1073–1110, 1113–1150, 1153–1190, 1193–1232, and 1236–1273; these read GHDD…CLRT, GHTG…CVHT, GHTS…CLHV, GHLA…CLHT, GHTN…CKHT, GHQS…QTLS, and KHHS…FIRN.

In terms of assembly, part of a SCF E3 ubiquitin-protein ligase complex. Interacts with Myc and puf. Interacts with CycE. In terms of tissue distribution, expressed in follicle cell epithelium and imaginal disks, particularly in the morphogenetic furrow.

It is found in the nucleus. The protein operates within protein modification; protein ubiquitination. Its function is as follows. Substrate recognition component of a SCF (SKP1-CUL1-F-box protein) E3 ubiquitin-protein ligase complex which mediates the ubiquitination and subsequent proteasomal degradation of target proteins. Probably recognizes and binds to phosphorylated target proteins. In the wing and eye, negatively regulates cell growth and proliferation by mediating the degradation of Myc and cyclin E, respectively. Required for endocycles, but not mitosis in follicle cell epithelium. The polypeptide is F-box/WD repeat-containing protein 7 (Drosophila melanogaster (Fruit fly)).